A 296-amino-acid chain; its full sequence is Ribosomal RNA small subunit methyltransferase A (296 aa).

A compositionally biased stretch (basic and acidic residues) spans 1 to 11 (MERSHVGRDCG). The tract at residues 1–24 (MERSHVGRDCGSRSSPRAFSVPTS) is disordered. The segment covering 12–24 (SRSSPRAFSVPTS) has biased composition (polar residues). S-adenosyl-L-methionine is bound by residues N43, L45, G70, E91, D113, and N135.

It belongs to the class I-like SAM-binding methyltransferase superfamily. rRNA adenine N(6)-methyltransferase family. RsmA subfamily.

It localises to the cytoplasm. The enzyme catalyses adenosine(1518)/adenosine(1519) in 16S rRNA + 4 S-adenosyl-L-methionine = N(6)-dimethyladenosine(1518)/N(6)-dimethyladenosine(1519) in 16S rRNA + 4 S-adenosyl-L-homocysteine + 4 H(+). Its function is as follows. Specifically dimethylates two adjacent adenosines (A1518 and A1519) in the loop of a conserved hairpin near the 3'-end of 16S rRNA in the 30S particle. May play a critical role in biogenesis of 30S subunits. The protein is Ribosomal RNA small subunit methyltransferase A of Salinibacter ruber (strain DSM 13855 / M31).